A 500-amino-acid chain; its full sequence is Pyridine nucleotide-disulfide oxidoreductase domain-containing protein 1 (500 aa).

Met-1 carries the N-acetylmethionine modification. The interval 211–235 is disordered; it reads TRYTTEGRKKEARSKSKADNVGSAL. The segment covering 213–228 has biased composition (basic and acidic residues); it reads YTTEGRKKEARSKSKA.

This sequence belongs to the class-I pyridine nucleotide-disulfide oxidoreductase family. PYROXD1 subfamily. It depends on FAD as a cofactor.

The protein resides in the nucleus. It localises to the cytoplasm. The protein localises to the myofibril. Its subcellular location is the sarcomere. Probable FAD-dependent oxidoreductase; involved in the cellular oxidative stress response. Required for normal sarcomere structure and muscle fiber integrity. The protein is Pyridine nucleotide-disulfide oxidoreductase domain-containing protein 1 (PYROXD1) of Homo sapiens (Human).